Reading from the N-terminus, the 206-residue chain is Thymidylate kinase (206 aa).

An ATP-binding site is contributed by 11–18 (GIDGAGKT).

Belongs to the thymidylate kinase family.

The enzyme catalyses dTMP + ATP = dTDP + ADP. In terms of biological role, phosphorylation of dTMP to form dTDP in both de novo and salvage pathways of dTTP synthesis. In Burkholderia mallei (strain NCTC 10247), this protein is Thymidylate kinase.